A 282-amino-acid polypeptide reads, in one-letter code: MPELPEVETVRKGLEKLLNDFYIERIEVLKERSIASNGGSKSFIVSVKNSYLGSWERRGKYLIGSLLTKEKFSKGFLVVHLRMTGQFKLLEKEVLACKHTRVRFFDERGRELRFIDIRNFGQMWHVPSSRSIPEIVSGIKRLGPEPFSDDFNSHYLEEYLKKKTRSIKSALLDQETVAGVGNIYADETLFDAGINPKKESRNLKSTELKRLCNSLVKILNISIGEGGTTFSDFRDLEGINGNYGGQAWVYRRSGKNCKKCGEKILREKICGRSTHWCPNCQK.

Proline 2 acts as the Schiff-base intermediate with DNA in catalysis. Glutamate 3 acts as the Proton donor in catalysis. Lysine 60 acts as the Proton donor; for beta-elimination activity in catalysis. DNA contacts are provided by histidine 99, arginine 118, and lysine 163. The segment at 248-282 (WVYRRSGKNCKKCGEKILREKICGRSTHWCPNCQK) adopts an FPG-type zinc-finger fold. The Proton donor; for delta-elimination activity role is filled by arginine 272.

It belongs to the FPG family. In terms of assembly, monomer. Zn(2+) is required as a cofactor.

It catalyses the reaction Hydrolysis of DNA containing ring-opened 7-methylguanine residues, releasing 2,6-diamino-4-hydroxy-5-(N-methyl)formamidopyrimidine.. The enzyme catalyses 2'-deoxyribonucleotide-(2'-deoxyribose 5'-phosphate)-2'-deoxyribonucleotide-DNA = a 3'-end 2'-deoxyribonucleotide-(2,3-dehydro-2,3-deoxyribose 5'-phosphate)-DNA + a 5'-end 5'-phospho-2'-deoxyribonucleoside-DNA + H(+). Functionally, involved in base excision repair of DNA damaged by oxidation or by mutagenic agents. Acts as a DNA glycosylase that recognizes and removes damaged bases. Has a preference for oxidized purines, such as 7,8-dihydro-8-oxoguanine (8-oxoG). Has AP (apurinic/apyrimidinic) lyase activity and introduces nicks in the DNA strand. Cleaves the DNA backbone by beta-delta elimination to generate a single-strand break at the site of the removed base with both 3'- and 5'-phosphates. This chain is Formamidopyrimidine-DNA glycosylase, found in Prochlorococcus marinus (strain NATL2A).